The following is a 207-amino-acid chain: Probable GTP-binding protein EngB (207 aa).

Positions 22–194 constitute an EngB-type G domain; the sequence is DLPEIAFAGR…WRRIEEVLPA (173 aa). Residues 30 to 37, 57 to 61, 75 to 78, 142 to 145, and 173 to 175 each bind GTP; these read GRSNVGKS, GRTQL, DLPG, TKCD, and FSA. Mg(2+) contacts are provided by serine 37 and threonine 59.

Belongs to the TRAFAC class TrmE-Era-EngA-EngB-Septin-like GTPase superfamily. EngB GTPase family. Requires Mg(2+) as cofactor.

Its function is as follows. Necessary for normal cell division and for the maintenance of normal septation. This is Probable GTP-binding protein EngB from Geotalea daltonii (strain DSM 22248 / JCM 15807 / FRC-32) (Geobacter daltonii).